The sequence spans 549 residues: ATP synthase subunit alpha (549 aa).

ATP is bound at residue 172–179 (GDRKTGKT). Positions 513–549 (SSTGESVVPDEHVEAMDEEDLGKESVKVKKPAPQKKK) are disordered. Residues 540–549 (VKKPAPQKKK) are compositionally biased toward basic residues.

The protein belongs to the ATPase alpha/beta chains family. In terms of assembly, F-type ATPases have 2 components, CF(1) - the catalytic core - and CF(0) - the membrane proton channel. CF(1) has five subunits: alpha(3), beta(3), gamma(1), delta(1), epsilon(1). CF(0) has three main subunits: a(1), b(2) and c(9-12). The alpha and beta chains form an alternating ring which encloses part of the gamma chain. CF(1) is attached to CF(0) by a central stalk formed by the gamma and epsilon chains, while a peripheral stalk is formed by the delta and b chains.

The protein localises to the cell membrane. It carries out the reaction ATP + H2O + 4 H(+)(in) = ADP + phosphate + 5 H(+)(out). Produces ATP from ADP in the presence of a proton gradient across the membrane. The alpha chain is a regulatory subunit. In Mycobacterium marinum (strain ATCC BAA-535 / M), this protein is ATP synthase subunit alpha.